The sequence spans 145 residues: Bacilliredoxin BLi02578/BL01507 (145 aa).

Belongs to the bacilliredoxin family.

The protein is Bacilliredoxin BLi02578/BL01507 of Bacillus licheniformis (strain ATCC 14580 / DSM 13 / JCM 2505 / CCUG 7422 / NBRC 12200 / NCIMB 9375 / NCTC 10341 / NRRL NRS-1264 / Gibson 46).